Consider the following 421-residue polypeptide: UDP-N-acetylglucosamine 1-carboxyvinyltransferase (421 aa).

Phosphoenolpyruvate is bound at residue 22–23; that stretch reads KN. UDP-N-acetyl-alpha-D-glucosamine is bound at residue Arg93. The active-site Proton donor is the Cys117. Cys117 bears the 2-(S-cysteinyl)pyruvic acid O-phosphothioketal mark. Residues 122–126, Asp309, and Ile331 contribute to the UDP-N-acetyl-alpha-D-glucosamine site; that span reads RPVDQ.

The protein belongs to the EPSP synthase family. MurA subfamily.

It localises to the cytoplasm. The catalysed reaction is phosphoenolpyruvate + UDP-N-acetyl-alpha-D-glucosamine = UDP-N-acetyl-3-O-(1-carboxyvinyl)-alpha-D-glucosamine + phosphate. The protein operates within cell wall biogenesis; peptidoglycan biosynthesis. Cell wall formation. Adds enolpyruvyl to UDP-N-acetylglucosamine. The polypeptide is UDP-N-acetylglucosamine 1-carboxyvinyltransferase (Albidiferax ferrireducens (strain ATCC BAA-621 / DSM 15236 / T118) (Rhodoferax ferrireducens)).